A 31-amino-acid chain; its full sequence is Potassium channel toxin alpha-KTx 5.4 (31 aa).

Disulfide bonds link C3-C21, C8-C26, and C12-C28. The segment at 6–9 (RRCE) is [R/K]XCQ motif. The residue at position 31 (Y31) is a Tyrosine amide.

Belongs to the short scorpion toxin superfamily. Potassium channel inhibitor family. Alpha-KTx 05 subfamily. In terms of tissue distribution, expressed by the venom gland.

The protein resides in the secreted. Functionally, blocks small conductance calcium-activated potassium channels. Shows activity on KCa2.2/KCNN2 (IC(50)=0.0243 nM), KCa2.3/KCNN3 (IC(50)=1.7 nM), and KCa2.1/KCNN1 (IC(50)=42 nM). Induces cell death when tested on human T lymphoblastic leukemia Jurkat E6.1 and human breast cancer MDA-MB-231 cell lines which constituvely express KCa2.2/KCNN2, but not on human peripheral blood lymphocytes (which do not express KCa2.2/KCNN2). This Hottentotta tamulus (Eastern Indian scorpion) protein is Potassium channel toxin alpha-KTx 5.4.